A 152-amino-acid polypeptide reads, in one-letter code: Cell division protein SepF (152 aa).

Residues 21-56 (EYIETEQDHPEEHEQQKDKQPAYAQKPQGKQNVVSL) form a disordered region. The segment covering 26 to 40 (EQDHPEEHEQQKDKQ) has biased composition (basic and acidic residues).

This sequence belongs to the SepF family. Homodimer. Interacts with FtsZ.

It localises to the cytoplasm. In terms of biological role, cell division protein that is part of the divisome complex and is recruited early to the Z-ring. Probably stimulates Z-ring formation, perhaps through the cross-linking of FtsZ protofilaments. Its function overlaps with FtsA. This is Cell division protein SepF from Bacillus velezensis (strain DSM 23117 / BGSC 10A6 / LMG 26770 / FZB42) (Bacillus amyloliquefaciens subsp. plantarum).